A 574-amino-acid polypeptide reads, in one-letter code: Golgin subfamily A member 6-like protein 4 (574 aa).

The segment covering 1 to 11 (MWPQPRFPPHP) has biased composition (pro residues). 2 disordered regions span residues 1–77 (MWPQ…YGEG) and 491–552 (KELK…AAGG). A compositionally biased stretch (polar residues) spans 51-62 (NGSSPDTATSGG). Residues 157–496 (SKVEQLQDET…EQQVKELKKS (340 aa)) are a coiled coil. A compositionally biased stretch (basic and acidic residues) spans 491–504 (KELKKSGGAEEPRG). A compositionally biased stretch (low complexity) spans 508 to 523 (AAAARPVAGAPVPQGA).

This sequence belongs to the GOLGA6 family.

This is Golgin subfamily A member 6-like protein 4 (GOLGA6L4) from Homo sapiens (Human).